The following is a 367-amino-acid chain: Epoxide hydrolase 3 (367 aa).

A helical membrane pass occupies residues 22–42 (ALVMSLVYLAALVAAFVYSCI). Catalysis depends on D180, which acts as the Nucleophile. Y288 functions as the Proton donor in the catalytic mechanism. H344 serves as the catalytic Proton acceptor.

The protein belongs to the AB hydrolase superfamily. Epoxide hydrolase family. In terms of tissue distribution, predominantly expressed in skin, esophagus, lung and tongue and to a lesser extent in pancreas and eye.

Its subcellular location is the microsome membrane. It catalyses the reaction an epoxide + H2O = an ethanediol. The catalysed reaction is 9,10-epoxyoctadecanoate + H2O = 9,10-dihydroxyoctadecanoate. The enzyme catalyses 9,10-epoxy-(12Z)-octadecenoate + H2O = 9,10-dihydroxy-(12Z)-octadecenoate. It carries out the reaction 8,9-epoxy-(5Z,11Z,14Z)-eicosatrienoate + H2O = 8,9-dihydroxy-(5Z,11Z,14Z)-eicosatrienoate. It catalyses the reaction 11,12-epoxy-(5Z,8Z,14Z)-eicosatrienoate + H2O = 11,12-dihydroxy-(5Z,8Z,14Z)-eicosatrienoate. The catalysed reaction is 14,15-epoxy-(5Z,8Z,11Z)-eicosatrienoate + H2O = 14,15-dihydroxy-(5Z,8Z,11Z)-eicosatrienoate. Its activity is regulated as follows. Inhibited by 1-(1-acetylpiperidin-4-yl)-3-(4-(trifl uoromethoxy)phenyl)urea (TPAU), 1-cyclohexyl-3-dodecylurea (CDU), 12-(3-adamantan-1-yl-ureido)-dodecanoic acid (AUDA), 1-((3S, 5S, 7S)-adamantan-1-yl)-3-(5-(2-(2-ethoxyethoxy) ethoxy)pentyl)urea (AEPU) and to a lesser extent by 8-(3-((3S, 5S, 7S)-adamantan-1-yl)ureido) octanoic acid (AUOA). Its function is as follows. Catalyzes the hydrolysis of epoxide-containing fatty acids. Active in vitro against epoxyeicosatrienoic acids (EETs) including 8,9-EET, 9,10-EET, 11,12-EET and 14,15-EET and leukotoxin. The sequence is that of Epoxide hydrolase 3 (Ephx3) from Mus musculus (Mouse).